A 73-amino-acid polypeptide reads, in one-letter code: Ubiquitin-like modifier HUB1 (73 aa).

The 73-residue stretch at 1 to 73 (MIEVVVNDRL…DQTNLELYYL (73 aa)) folds into the Ubiquitin-like domain.

Its function is as follows. Forms conjugate with SPH1 and HBT1. Involved in morphogenesis. The chain is Ubiquitin-like modifier HUB1 (HUB1) from Saccharomyces cerevisiae (strain ATCC 204508 / S288c) (Baker's yeast).